A 180-amino-acid chain; its full sequence is Large ribosomal subunit protein bL19 (180 aa).

Belongs to the bacterial ribosomal protein bL19 family.

In terms of biological role, this protein is located at the 30S-50S ribosomal subunit interface and may play a role in the structure and function of the aminoacyl-tRNA binding site. This Allorhizobium ampelinum (strain ATCC BAA-846 / DSM 112012 / S4) (Agrobacterium vitis (strain S4)) protein is Large ribosomal subunit protein bL19.